A 210-amino-acid polypeptide reads, in one-letter code: ATP-dependent dethiobiotin synthetase BioD (210 aa).

12-17 (NVGKTH) provides a ligand contact to ATP. A Mg(2+)-binding site is contributed by threonine 16. Lysine 37 is a catalytic residue. Residue threonine 41 coordinates substrate. Mg(2+) is bound at residue glutamate 114. 114–117 (EGAG) lines the ATP pocket.

It belongs to the dethiobiotin synthetase family. As to quaternary structure, homodimer. Requires Mg(2+) as cofactor.

It is found in the cytoplasm. It catalyses the reaction (7R,8S)-7,8-diammoniononanoate + CO2 + ATP = (4R,5S)-dethiobiotin + ADP + phosphate + 3 H(+). It participates in cofactor biosynthesis; biotin biosynthesis; biotin from 7,8-diaminononanoate: step 1/2. Its function is as follows. Catalyzes a mechanistically unusual reaction, the ATP-dependent insertion of CO2 between the N7 and N8 nitrogen atoms of 7,8-diaminopelargonic acid (DAPA, also called 7,8-diammoniononanoate) to form a ureido ring. This chain is ATP-dependent dethiobiotin synthetase BioD, found in Sulfurovum sp. (strain NBC37-1).